Consider the following 272-residue polypeptide: Formamidopyrimidine-DNA glycosylase (272 aa).

Catalysis depends on Pro2, which acts as the Schiff-base intermediate with DNA. The active-site Proton donor is Glu3. Catalysis depends on Lys58, which acts as the Proton donor; for beta-elimination activity. The DNA site is built by His91, Arg111, and Arg153. Residues 238–272 (AVYGRANKACVICSKPLKEIRQAQRSTVFCINCQS) form an FPG-type zinc finger. Arg262 serves as the catalytic Proton donor; for delta-elimination activity.

It belongs to the FPG family. As to quaternary structure, monomer. It depends on Zn(2+) as a cofactor.

It carries out the reaction Hydrolysis of DNA containing ring-opened 7-methylguanine residues, releasing 2,6-diamino-4-hydroxy-5-(N-methyl)formamidopyrimidine.. The enzyme catalyses 2'-deoxyribonucleotide-(2'-deoxyribose 5'-phosphate)-2'-deoxyribonucleotide-DNA = a 3'-end 2'-deoxyribonucleotide-(2,3-dehydro-2,3-deoxyribose 5'-phosphate)-DNA + a 5'-end 5'-phospho-2'-deoxyribonucleoside-DNA + H(+). Its function is as follows. Involved in base excision repair of DNA damaged by oxidation or by mutagenic agents. Acts as a DNA glycosylase that recognizes and removes damaged bases. Has a preference for oxidized purines, such as 7,8-dihydro-8-oxoguanine (8-oxoG). Has AP (apurinic/apyrimidinic) lyase activity and introduces nicks in the DNA strand. Cleaves the DNA backbone by beta-delta elimination to generate a single-strand break at the site of the removed base with both 3'- and 5'-phosphates. This chain is Formamidopyrimidine-DNA glycosylase, found in Marinomonas sp. (strain MWYL1).